The chain runs to 391 residues: Probable sugar efflux transporter (391 aa).

Helical transmembrane passes span 16–36 (VFVF…PVAL), 51–71 (VGLM…PLML), 82–102 (LLFL…AWNF), 103–123 (WVLL…WSIT), 138–158 (QALG…LPLG), 170–190 (TFGV…KLLP), 210–230 (PLLV…FTTY), 247–267 (ITTL…FLFG), 277–297 (FIAF…VFKN), 300–320 (WVIF…TIAL), 338–358 (IFSG…SIVI), and 361–381 (LGLE…LFWL).

The protein belongs to the major facilitator superfamily. SotB (TC 2.A.1.2) family.

The protein localises to the cell inner membrane. In terms of biological role, involved in the efflux of sugars. The physiological role may be the reduction of the intracellular concentration of toxic sugars or sugar metabolites. In Helicobacter pylori (strain P12), this protein is Probable sugar efflux transporter.